The sequence spans 223 residues: Urease accessory protein UreF (223 aa).

Belongs to the UreF family. UreD, UreF and UreG form a complex that acts as a GTP-hydrolysis-dependent molecular chaperone, activating the urease apoprotein by helping to assemble the nickel containing metallocenter of UreC. The UreE protein probably delivers the nickel.

The protein localises to the cytoplasm. Required for maturation of urease via the functional incorporation of the urease nickel metallocenter. This is Urease accessory protein UreF from Rhizobium leguminosarum bv. trifolii (strain WSM2304).